We begin with the raw amino-acid sequence, 135 residues long: Large ribosomal subunit protein eL32 (135 aa).

The protein belongs to the eukaryotic ribosomal protein eL32 family.

The chain is Large ribosomal subunit protein eL32 from Methanococcus maripaludis (strain C5 / ATCC BAA-1333).